We begin with the raw amino-acid sequence, 337 residues long: DNA-directed RNA polymerase subunit alpha (337 aa).

The tract at residues 1 to 233 (MVREEVVGST…DLFIPFLHAE (233 aa)) is alpha N-terminal domain (alpha-NTD). The interval 265 to 337 (KEIALKCIFI…FAIDLPKNKF (73 aa)) is alpha C-terminal domain (alpha-CTD).

Belongs to the RNA polymerase alpha chain family. In plastids the minimal PEP RNA polymerase catalytic core is composed of four subunits: alpha, beta, beta', and beta''. When a (nuclear-encoded) sigma factor is associated with the core the holoenzyme is formed, which can initiate transcription.

The protein resides in the plastid. The protein localises to the chloroplast. The enzyme catalyses RNA(n) + a ribonucleoside 5'-triphosphate = RNA(n+1) + diphosphate. In terms of biological role, DNA-dependent RNA polymerase catalyzes the transcription of DNA into RNA using the four ribonucleoside triphosphates as substrates. This Acorus gramineus (Dwarf sweet flag) protein is DNA-directed RNA polymerase subunit alpha.